A 533-amino-acid polypeptide reads, in one-letter code: Trigger factor (533 aa).

The PPIase FKBP-type domain occupies G164–T249. The segment at E436–K533 is disordered. The span at A465–A477 shows a compositional bias: basic residues. Residues A481 to A490 show a composition bias toward basic and acidic residues. 2 stretches are compositionally biased toward basic residues: residues A494–T506 and P515–K533.

Belongs to the FKBP-type PPIase family. Tig subfamily.

Its subcellular location is the cytoplasm. It catalyses the reaction [protein]-peptidylproline (omega=180) = [protein]-peptidylproline (omega=0). Functionally, involved in protein export. Acts as a chaperone by maintaining the newly synthesized protein in an open conformation. Functions as a peptidyl-prolyl cis-trans isomerase. In Erythrobacter litoralis (strain HTCC2594), this protein is Trigger factor.